Consider the following 451-residue polypeptide: Putative gluconeogenesis factor (451 aa).

It belongs to the gluconeogenesis factor family.

The protein localises to the cytoplasm. In terms of biological role, required for morphogenesis under gluconeogenic growth conditions. In Clostridium acetobutylicum (strain ATCC 824 / DSM 792 / JCM 1419 / IAM 19013 / LMG 5710 / NBRC 13948 / NRRL B-527 / VKM B-1787 / 2291 / W), this protein is Putative gluconeogenesis factor.